Consider the following 51-residue polypeptide: Large ribosomal subunit protein bL33 (51 aa).

The protein belongs to the bacterial ribosomal protein bL33 family.

This Methylococcus capsulatus (strain ATCC 33009 / NCIMB 11132 / Bath) protein is Large ribosomal subunit protein bL33.